Consider the following 266-residue polypeptide: Zinc finger protein SNAI2 (266 aa).

The tract at residues Met-1 to Gly-20 is SNAG domain. The disordered stretch occupies residues Ser-75–Leu-115. C2H2-type zinc fingers lie at residues Phe-126–His-148, Phe-157–His-179, Cys-183–His-205, and Phe-211–His-233. The segment at Tyr-239–Cys-262 adopts a C2H2-type 5; atypical zinc-finger fold.

The protein belongs to the snail C2H2-type zinc-finger protein family. As to quaternary structure, interacts (via SNAG domain) with limd1 (via LIM domains), wtip (via LIM domains) and ajuba (via LIM domains). Interacts with elp3. As to expression, first expressed on the lateral side of stage 12 embryos. At stage 14, strongly expressed in the lateral neural folds. At stage 16, expressed in pre-migratory neural crest cells. At stage 18, expression is dispersed over the neural plate in a pattern surrounding the rhombomeres. At stage 22, expressed in neural crest derivatives, including the branchial arches and the tissues surrounding the eyes and forebrain. After stage 17, expression is weak in the lateral plate mesoderm, increasing at stage 26, but was down-regulated in the pronephros region at stage 26.

It is found in the nucleus. Its function is as follows. Probable transcriptional repressor. Acts downstream of snai1 in the specification of the neural crest and neural crest migration. In Xenopus laevis (African clawed frog), this protein is Zinc finger protein SNAI2 (snai2).